Reading from the N-terminus, the 456-residue chain is Phosphoglucomutase/phosphomannomutase (456 aa).

Ser-101 serves as the catalytic Phosphoserine intermediate. The Mg(2+) site is built by Ser-101, Asp-243, Asp-245, and Asp-247. A Phosphoserine; by autocatalysis modification is found at Ser-101.

It belongs to the phosphohexose mutase family. In terms of assembly, homotetramer. The cofactor is Mg(2+). In terms of processing, activated by phosphorylation.

The catalysed reaction is alpha-D-glucose 1-phosphate = alpha-D-glucose 6-phosphate. It carries out the reaction alpha-D-mannose 1-phosphate = D-mannose 6-phosphate. Functionally, catalyzes the interconversion of glucose 1-phosphate and glucose 6-phosphate, and the interconversion of mannose 1-phosphate and mannose 6-phosphate. Also displays low activity with deoxyribose 1-phosphate and glucosamine 1-phosphate. This chain is Phosphoglucomutase/phosphomannomutase, found in Thermococcus kodakarensis (strain ATCC BAA-918 / JCM 12380 / KOD1) (Pyrococcus kodakaraensis (strain KOD1)).